The primary structure comprises 386 residues: CUE domain-containing protein 1 (386 aa).

Over residues 1-10 (MTSLFRRSSS) the composition is skewed to low complexity. Residues 1 to 40 (MTSLFRRSSSGSGGGGTAGARGGGGGTAAPQELNNSRPAR) are disordered. Over residues 11–27 (GSGGGGTAGARGGGGGT) the composition is skewed to gly residues. The CUE domain maps to 46 to 89 (EFNQAMDDFKTMFPNMDYDIIECVLRANSGAVDATIDQLLQMNL). Disordered regions lie at residues 147 to 172 (LAPP…RYRN), 195 to 225 (SIQG…DQES), and 367 to 386 (DFRG…REGQ). The segment covering 199 to 209 (NAGGPKPGSGE) has biased composition (gly residues).

This Homo sapiens (Human) protein is CUE domain-containing protein 1 (CUEDC1).